Reading from the N-terminus, the 513-residue chain is Histone acetyltransferase KAT5 (513 aa).

The region spanning 8 to 65 (IEGCRLPVLRRNQDNEDEWPLAEILSVKDISGRKLFYVHYIDFNKRLDEWVTHERLDL) is the Tudor-knot domain. Residue Lys52 is modified to N6-acetyllysine. Residues 69–106 (QFPKKEAKTPTKNGLPGSRPGSPEREVPASAQASGKTL) are disordered. A Phosphoserine modification is found at Ser86. Ser90 carries the phosphoserine; by CDK1 and CDK9 modification. Residues Lys104 and Lys120 each carry the N6-acetyllysine; by autocatalysis modification. Residues 122 to 217 (REAIPGGEPD…SAPRMTGSLV (96 aa)) form a disordered region. Polar residues predominate over residues 133 to 144 (PLSSSSCLQPNH). 4 positions are modified to N6-acetyllysine; by autocatalysis: Lys148, Lys150, Lys187, and Lys189. A Phosphoserine modification is found at Ser199. Residues 227–504 (TRMKNIECIE…IDSKCLHFTP (278 aa)) enclose the MYST-type HAT domain. The segment at 260-285 (LYLCEFCLKYGRSLKCLQRHLTKCDL) adopts a C2HC MYST-type zinc-finger fold. Position 327 is an N6-acetyllysine; by autocatalysis (Lys327). The interaction with ATF2 stretch occupies residues 368-513 (ACILTLPPYQ…PKDWSKRGKW (146 aa)). Residues 370 to 372 (ILT) and 377 to 383 (QRRGYGK) each bind acetyl-CoA. The active-site Proton donor/acceptor is Glu403. Acetyl-CoA contacts are provided by Ser407 and Ser416. Lys430 is covalently cross-linked (Glycyl lysine isopeptide (Lys-Gly) (interchain with G-Cter in SUMO1); alternate). Lys430 participates in a covalent cross-link: Glycyl lysine isopeptide (Lys-Gly) (interchain with G-Cter in SUMO2); alternate. A Glycyl lysine isopeptide (Lys-Gly) (interchain with G-Cter in SUMO1) cross-link involves residue Lys451.

The protein belongs to the MYST (SAS/MOZ) family. In terms of assembly, component of the NuA4 histone acetyltransferase complex which contains the catalytic subunit KAT5/TIP60 and the subunits EP400, TRRAP/PAF400, BRD8/SMAP, EPC1, DMAP1/DNMAP1, RUVBL1/TIP49, RUVBL2, ING3, actin, ACTL6A/BAF53A, MORF4L1/MRG15, MORF4L2/MRGX, MRGBP, YEATS4/GAS41, VPS72/YL1 and MEAF6. KAT5/TIP60, EPC1, and ING3 together constitute a minimal HAT complex termed Piccolo NuA4. The NuA4 complex interacts with MYC. Interacts with ATM. Interacts with JADE1. Interacts with PLA2G4A/CPLA2, EDNRA and HDAC7. Interacts with the cytoplasmic tail of APP and APBB1/FE65. Interacts with TRIM24 and TRIM68. Forms a complex with SENP6 and UBE2I in response to UV irradiation. Identified in a complex with HINT1. Interacts with ATF2 and CUL3. Interacts with NR1D2 (via N-terminus). Component of a SWR1-like complex. Interacts with FOXP3. Interacts with ZBTB49. Interacts with SRF. Interacts with ATF3; promoting autoacetylation and deubiquitination by USP7. Interacts with EP300/p300; interaction promotes KAT5 autoacetylation. Interacts with PRKDC; interaction is impaired following KAT5 sumoylation. Interacts with GPR50. Interacts with NME3; this interaction enables recruitment of NME3 at DNA damage sites where it plays a role in the repair of DNA. In terms of processing, phosphorylated on Ser-86 and Ser-90; enhanced during G2/M phase. The phosphorylated form has a higher activity. Phosphorylation at Ser-90 by CDK1 or CDK9 is a prerequisite for phosphorylation at Ser-86 by GSK3. Phosphorylation at Ser-86 by GSK3 (GSK3A or GSK3B) activates acetyltransferase and acyltransferase activity. Phosphorylation at Ser-90 by CDK9 promotes KAT5 recruitment to chromatin. Phosphorylation by VRK1 following DNA damage promotes KAT5 association with chromatin and histone acetyltransferase activity. Post-translationally, autoacetylated. Autoacetylation is required for histone acetyltransferase activity. Autoacetylation at Lys-327 is facilitated by interaction with EP300/p300: it prevents ubiquitination and subsequent degradation by the proteasome and promotes acetylation of target proteins. Deacetylated by HDAC3 and SIRT1. Deacetylation by HDAC3 promotes its ubiquitination and cytoplasmic localization. Sumoylated by UBE2I at Lys-430 and Lys-451, leading to increase of its histone acetyltransferase activity in UV-induced DNA damage response, as well as its translocation to nuclear bodies. Sumoylation with SUMO2 by PIAS4 at Lys-430 promotes repair of DNA double-strand breaks (DSBs) via homologous recombination (HR). Sumoylation by PIAS4 impairs interaction with PRKDC, inhibiting non-homologous end joining (NHEJ)-mediated repair of DSBs, thereby facilitating HR. Desumoylated by SENP3. In terms of processing, ubiquitinated by MDM2, leading to its proteasome-dependent degradation. Ubiquitination is prevented by autoacetylation at Lys-327. Ubiquitinated following deacetylation by HDAC3, leading to cytoplasmic localization. Deubiquitinated by USP7 following interaction with ATF3, promoting its stabilization. As to expression, expressed in testis, heart, brain, kidney and liver. Weakly expressed in lung.

The protein resides in the nucleus. It is found in the chromosome. Its subcellular location is the cytoplasm. It localises to the centromere. The protein localises to the kinetochore. The protein resides in the cytoskeleton. It is found in the spindle pole. Its subcellular location is the nucleolus. It localises to the perinuclear region. It carries out the reaction L-lysyl-[histone] + acetyl-CoA = N(6)-acetyl-L-lysyl-[histone] + CoA + H(+). The catalysed reaction is L-lysyl-[protein] + acetyl-CoA = N(6)-acetyl-L-lysyl-[protein] + CoA + H(+). It catalyses the reaction (2E)-butenoyl-CoA + L-lysyl-[protein] = N(6)-(2E)-butenoyl-L-lysyl-[protein] + CoA + H(+). The enzyme catalyses 2-hydroxyisobutanoyl-CoA + L-lysyl-[protein] = N(6)-(2-hydroxyisobutanoyl)-L-lysyl-[protein] + CoA + H(+). It carries out the reaction (S)-lactoyl-CoA + L-lysyl-[protein] = N(6)-[(S)-lactoyl]-L-lysyl-[protein] + CoA + H(+). Acyltransferase and acetyltransferase activities are activated by phosphorylation and autoacetylation. Autoacetylation activates the histone acetyltransferase activity. Its function is as follows. Catalytic subunit of the NuA4 histone acetyltransferase complex, a multiprotein complex involved in transcriptional activation of select genes principally by acetylation of nucleosomal histones H2A and H4. Histone acetylation alters nucleosome-DNA interactions and promotes interaction of the modified histones with other proteins which positively regulate transcription. The NuA4 histone acetyltransferase complex is required for the activation of transcriptional programs associated with proto-oncogene mediated growth induction, tumor suppressor mediated growth arrest and replicative senescence, apoptosis, and DNA repair. The NuA4 complex plays a direct role in repair of DNA double-strand breaks (DSBs) by promoting homologous recombination (HR): the complex inhibits TP53BP1 binding to chromatin via MBTD1, which recognizes and binds histone H4 trimethylated at 'Lys-20' (H4K20me), and KAT5 that catalyzes acetylation of 'Lys-15' of histone H2A (H2AK15ac), thereby blocking the ubiquitination mark required for TP53BP1 localization at DNA breaks. Also involved in DSB repair by mediating acetylation of 'Lys-5' of histone H2AX (H2AXK5ac), promoting NBN/NBS1 assembly at the sites of DNA damage. The NuA4 complex plays a key role in hematopoietic stem cell maintenance and is required to maintain acetylated H2A.Z/H2AZ1 at MYC target genes. The NuA4 complex is also required for spermatid development by promoting acetylation of histones: histone hyperacetylation is required for histone replacement during the transition from round to elongating spermatids. Component of a SWR1-like complex that specifically mediates the removal of histone H2A.Z/H2AZ1 from the nucleosome. Also acetylates non-histone proteins, such as BMAL1, ATM, AURKB, CHKA, CGAS, ERCC4/XPF, LPIN1, TP53/p53, NDC80/HEC1, NR1D2, RAN, SOX4, FOXP3, SQSTM1, ULK1 and RUBCNL/Pacer. Directly acetylates and activates ATM. Promotes nucleotide excision repair (NER) by mediating acetylation of ERCC4/XPF, thereby promoting formation of the ERCC4-ERCC1 complex. Relieves NR1D2-mediated inhibition of APOC3 expression by acetylating NR1D2. Acts as a regulator of regulatory T-cells (Treg) by catalyzing FOXP3 acetylation, thereby promoting FOXP3 transcriptional repressor activity. Involved in skeletal myoblast differentiation by mediating acetylation of SOX4. Catalyzes acetylation of APBB1/FE65, increasing its transcription activator activity. Promotes transcription elongation during the activation phase of the circadian cycle by catalyzing acetylation of BMAL1, promoting elongation of circadian transcripts. Together with GSK3 (GSK3A or GSK3B), acts as a regulator of autophagy: phosphorylated at Ser-86 by GSK3 under starvation conditions, leading to activate acetyltransferase activity and promote acetylation of key autophagy regulators, such as ULK1 and RUBCNL/Pacer. Acts as a regulator of the cGAS-STING innate antiviral response by catalyzing acetylation the N-terminus of CGAS, thereby promoting CGAS DNA-binding and activation. Also regulates lipid metabolism by mediating acetylation of CHKA or LPIN1. Promotes lipolysis of lipid droplets following glucose deprivation by mediating acetylation of isoform 1 of CHKA, thereby promoting monomerization of CHKA and its conversion into a tyrosine-protein kinase. Acts as a regulator of fatty-acid-induced triacylglycerol synthesis by catalyzing acetylation of LPIN1, thereby promoting the synthesis of diacylglycerol. In addition to protein acetyltransferase, can use different acyl-CoA substrates, such as (2E)-butenoyl-CoA (crotonyl-CoA), S-lactoyl-CoA (lactyl-CoA) and 2-hydroxyisobutanoyl-CoA (2-hydroxyisobutyryl-CoA), and is able to mediate protein crotonylation, lactylation and 2-hydroxyisobutyrylation, respectively. Acts as a key regulator of chromosome segregation and kinetochore-microtubule attachment during mitosis by mediating acetylation or crotonylation of target proteins. Catalyzes acetylation of AURKB at kinetochores, increasing AURKB activity and promoting accurate chromosome segregation in mitosis. Acetylates RAN during mitosis, promoting microtubule assembly at mitotic chromosomes. Acetylates NDC80/HEC1 during mitosis, promoting robust kinetochore-microtubule attachment. Catalyzes crotonylation of MAPRE1/EB1, thereby ensuring accurate spindle positioning in mitosis. Catalyzes lactylation of NBN/NBS1 in response to DNA damage, thereby promoting DNA double-strand breaks (DSBs) via homologous recombination (HR). The polypeptide is Histone acetyltransferase KAT5 (Mus musculus (Mouse)).